We begin with the raw amino-acid sequence, 271 residues long: Tryptophan synthase alpha chain (271 aa).

Residues glutamate 49 and aspartate 60 each act as proton acceptor in the active site.

The protein belongs to the TrpA family. Tetramer of two alpha and two beta chains.

The enzyme catalyses (1S,2R)-1-C-(indol-3-yl)glycerol 3-phosphate + L-serine = D-glyceraldehyde 3-phosphate + L-tryptophan + H2O. It functions in the pathway amino-acid biosynthesis; L-tryptophan biosynthesis; L-tryptophan from chorismate: step 5/5. In terms of biological role, the alpha subunit is responsible for the aldol cleavage of indoleglycerol phosphate to indole and glyceraldehyde 3-phosphate. This is Tryptophan synthase alpha chain from Burkholderia lata (strain ATCC 17760 / DSM 23089 / LMG 22485 / NCIMB 9086 / R18194 / 383).